The sequence spans 341 residues: Enduracididine beta-hydroxylase (341 aa).

Fe cation-binding residues include H146 and E148. The tract at residues 203–223 is disordered; sequence HRIHGKAPGDESARESALRER. H300 contacts Fe cation.

The protein belongs to the clavaminate synthase family. Fe(2+) serves as cofactor.

It catalyses the reaction L-enduracididine + 2-oxoglutarate + O2 = (3S)-3-hydroxy-L-enduracididine + succinate + CO2. It participates in antibiotic biosynthesis. In terms of biological role, hydroxylates the beta carbon of free L-enduracididine to produce (3S)-3-hydroxy-L-enduracididine in biosynthesis of the nonproteinogenic amino acid beta-hydroxyenduracididine, a component of antibiotic mannopeptimycin. The chain is Enduracididine beta-hydroxylase (mppO) from Streptomyces hygroscopicus.